Reading from the N-terminus, the 471-residue chain is UDP-N-acetylmuramate--L-alanine ligase (471 aa).

Position 112-118 (112-118 (GTHGKTT)) interacts with ATP.

The protein belongs to the MurCDEF family.

It is found in the cytoplasm. The catalysed reaction is UDP-N-acetyl-alpha-D-muramate + L-alanine + ATP = UDP-N-acetyl-alpha-D-muramoyl-L-alanine + ADP + phosphate + H(+). The protein operates within cell wall biogenesis; peptidoglycan biosynthesis. Cell wall formation. The chain is UDP-N-acetylmuramate--L-alanine ligase from Cupriavidus metallidurans (strain ATCC 43123 / DSM 2839 / NBRC 102507 / CH34) (Ralstonia metallidurans).